The following is a 180-amino-acid chain: Bifunctional bis(5'-adenosyl)-triphosphatase/adenylylsulfatase FHIT (180 aa).

The HIT domain maps to 27–134; sequence SYAFGPYKID…LPRKGGDFEK (108 aa). Positions 52 and 108 each coordinate substrate. The short motif at 119–123 is the Histidine triad motif element; the sequence is HVHIH. His121 acts as the Tele-AMP-histidine intermediate in catalysis. His123 contacts substrate.

The catalysed reaction is P(1),P(3)-bis(5'-adenosyl) triphosphate + H2O = AMP + ADP + 2 H(+). The enzyme catalyses adenosine 5'-phosphosulfate + H2O = sulfate + AMP + 2 H(+). It catalyses the reaction adenosine 5'-phosphosulfate + NH4(+) = adenosine 5'-phosphoramidate + sulfate + 2 H(+). It carries out the reaction adenosine 5'-phosphoramidate + H2O = AMP + NH4(+). Functionally, possesses dinucleoside triphosphate hydrolase activity. Cleaves P(1)-P(3)-bis(5'-adenosyl) triphosphate (Ap3A) to yield AMP and ADP. Exhibits adenylylsulfatase activity, hydrolyzing adenosine 5'-phosphosulfate to yield AMP and sulfate. Exhibits adenosine 5'-monophosphoramidase activity, hydrolyzing purine nucleotide phosphoramidates with a single phosphate group such as adenosine 5'monophosphoramidate (AMP-NH2) to yield AMP and NH2. Exhibits adenylylsulfate-ammonia adenylyltransferase, catalyzing the ammonolysis of adenosine 5'-phosphosulfate resulting in the formation of adenosine 5'-phosphoramidate. This chain is Bifunctional bis(5'-adenosyl)-triphosphatase/adenylylsulfatase FHIT, found in Arabidopsis thaliana (Mouse-ear cress).